Reading from the N-terminus, the 136-residue chain is MSRHKSKSIPGRNLRLADQIQKDLAGLIQRELDMSRAGLITLSGVELSADYAHAKVYFTVLGAEPDAAAALLNEKAGWLHSQLYKLLHIHTVPTLRFVHDAQIARGIEMSALIDRANRPGPAADEPDEPDEPEDRR.

The segment at 114–136 (DRANRPGPAADEPDEPDEPEDRR) is disordered. The segment covering 124 to 136 (DEPDEPDEPEDRR) has biased composition (acidic residues).

Belongs to the RbfA family. In terms of assembly, monomer. Binds 30S ribosomal subunits, but not 50S ribosomal subunits or 70S ribosomes.

It localises to the cytoplasm. Its function is as follows. One of several proteins that assist in the late maturation steps of the functional core of the 30S ribosomal subunit. Associates with free 30S ribosomal subunits (but not with 30S subunits that are part of 70S ribosomes or polysomes). Required for efficient processing of 16S rRNA. May interact with the 5'-terminal helix region of 16S rRNA. The protein is Ribosome-binding factor A of Bordetella petrii (strain ATCC BAA-461 / DSM 12804 / CCUG 43448).